The sequence spans 325 residues: Beta-1,3-galactosyltransferase 6 (325 aa).

Topologically, residues 1–11 (MKVFRRAWRHR) are cytoplasmic. The chain crosses the membrane as a helical; Signal-anchor for type II membrane protein span at residues 12-30 (VALGLGGLAFCGTTLLYLA). At 31–325 (RCASEGETPS…QCCQRKEGVP (295 aa)) the chain is on the lumenal side. Asparagine 127 carries N-linked (GlcNAc...) asparagine glycosylation.

Belongs to the glycosyltransferase 31 family. It depends on Mn(2+) as a cofactor.

It localises to the golgi apparatus. It is found in the golgi stack membrane. The enzyme catalyses 3-O-(beta-D-galactosyl-(1-&gt;4)-beta-D-xylosyl)-L-seryl-[protein] + UDP-alpha-D-galactose = 3-O-(beta-D-galactosyl-(1-&gt;3)-beta-D-galactosyl-(1-&gt;4)-beta-D-xylosyl)-L-seryl-[protein] + UDP + H(+). It participates in glycan metabolism; chondroitin sulfate biosynthesis. The protein operates within glycan metabolism; heparan sulfate biosynthesis. In terms of biological role, beta-1,3-galactosyltransferase that transfers galactose from UDP-galactose to substrates with a terminal beta-linked galactose residue. Has a preference for galactose-beta-1,4-xylose that is found in the linker region of glycosaminoglycans, such as heparan sulfate and chondroitin sulfate. Has no activity towards substrates with terminal glucosamine or galactosamine residues. In Mus musculus (Mouse), this protein is Beta-1,3-galactosyltransferase 6 (B3galt6).